The following is a 468-amino-acid chain: Nuclear distribution protein PAC1-2 (468 aa).

The 33-residue stretch at 13–45 (QAEELHKSIIAYLTSLNLATTANTLRAELNLPE) folds into the LisH domain. The stretch at 66 to 92 (SVIRLQKKVLDLQAENAHLKNEIENAG) forms a coiled coil. WD repeat units lie at residues 118-159 (GHRL…RTLK), 161-201 (HTKA…KNIR), 205-251 (GHDH…CVKT), 254-293 (GHND…PECR), 298-358 (GHEN…IKVL), 360-399 (GHDN…KCVQ), 404-429 (MFDG…GDAG), and 430-468 (DGTP…IFAN).

This sequence belongs to the WD repeat LIS1/nudF family. As to quaternary structure, self-associates. Interacts with NDL1 and dynein.

The protein localises to the cytoplasm. It is found in the cytoskeleton. The protein resides in the spindle pole. In terms of biological role, positively regulates the activity of the minus-end directed microtubule motor protein dynein. May enhance dynein-mediated microtubule sliding by targeting dynein to the microtubule plus end. Required for nuclear migration during vegetative growth as well as development. Required for retrograde early endosome (EE) transport from the hyphal tip. Required for localization of dynein to the mitotic spindle poles. Recruits additional proteins to the dynein complex at SPBs. The polypeptide is Nuclear distribution protein PAC1-2 (Podospora anserina (strain S / ATCC MYA-4624 / DSM 980 / FGSC 10383) (Pleurage anserina)).